The following is a 624-amino-acid chain: Chaperone protein HtpG (624 aa).

Residues 1–336 (MKGQETRGFQ…SNDLPLNVSR (336 aa)) form an a; substrate-binding region. The b stretch occupies residues 337–552 (EILQDSTVTR…ADEMSTQMAK (216 aa)). Residues 553 to 624 (LFAAAGQSVP…IRRMNQLLVS (72 aa)) form a c region.

This sequence belongs to the heat shock protein 90 family. Homodimer.

The protein localises to the cytoplasm. Its function is as follows. Molecular chaperone. Has ATPase activity. The protein is Chaperone protein HtpG of Salmonella typhi.